The chain runs to 212 residues: MDRIPLPPMERPLIAILRGLKPEEAEGVVGALIETGFTAIEIPLNSPDPFRSIETAVKMAPAGCLIGAGTVLTTAQVERLADVGGRLMVSPNVEPAVIRLAATKGMVTMPGVFTPTEALAAAAAGASGLKFFPASVLGPSGITAIRAVLPGDLEIAAVGGVSEVNFADYAAIGIRSFGLGSSLYKPGMSAGDVRQRAIATLAAYDAVYGGQQ.

Arg-18 is a binding site for 2-dehydro-3-deoxy-6-phospho-D-galactonate. Glu-41 (proton donor/acceptor) is an active-site residue. Thr-70, Lys-130, Gly-160, Gly-180, and Ser-181 together coordinate 2-dehydro-3-deoxy-6-phospho-D-galactonate. The active-site Schiff-base intermediate with substrate is Lys-130.

Belongs to the KHG/KDPG aldolase family. In terms of assembly, homotrimer.

The enzyme catalyses 2-dehydro-3-deoxy-6-phospho-D-galactonate = D-glyceraldehyde 3-phosphate + pyruvate. It functions in the pathway carbohydrate acid metabolism; D-galactonate degradation; D-glyceraldehyde 3-phosphate and pyruvate from D-galactonate: step 3/3. Involved in the degradation of galactose via the DeLey-Doudoroff pathway. Catalyzes the reversible, stereospecific retro-aldol cleavage of 2-keto-3-deoxy-6-phosphogalactonate (KDPGal) to pyruvate and D-glyceraldehyde-3-phosphate. The polypeptide is Probable 2-dehydro-3-deoxy-6-phosphogalactonate aldolase (dgoA) (Rhizobium meliloti (strain 1021) (Ensifer meliloti)).